Consider the following 423-residue polypeptide: 3-phosphoshikimate 1-carboxyvinyltransferase (423 aa).

Residues K28, S29, and R33 each coordinate 3-phosphoshikimate. K28 provides a ligand contact to phosphoenolpyruvate. Residues G96 and R124 each contribute to the phosphoenolpyruvate site. Residues S169, S170, Q171, S198, E312, and H339 each coordinate 3-phosphoshikimate. Q171 is a binding site for phosphoenolpyruvate. The active-site Proton acceptor is E312. 3 residues coordinate phosphoenolpyruvate: R343, R384, and K409.

It belongs to the EPSP synthase family. Monomer.

The protein resides in the cytoplasm. It catalyses the reaction 3-phosphoshikimate + phosphoenolpyruvate = 5-O-(1-carboxyvinyl)-3-phosphoshikimate + phosphate. It participates in metabolic intermediate biosynthesis; chorismate biosynthesis; chorismate from D-erythrose 4-phosphate and phosphoenolpyruvate: step 6/7. Catalyzes the transfer of the enolpyruvyl moiety of phosphoenolpyruvate (PEP) to the 5-hydroxyl of shikimate-3-phosphate (S3P) to produce enolpyruvyl shikimate-3-phosphate and inorganic phosphate. This is 3-phosphoshikimate 1-carboxyvinyltransferase from Acidothermus cellulolyticus (strain ATCC 43068 / DSM 8971 / 11B).